The sequence spans 361 residues: MPRLLIAASGTGGHLFPALAVAESLPASWSVCWLGVPDRLETQLVPERYELTTVRAGGLQGRGLRKLVQLLQLLAATGRVRKLLRKQGIQTVFTTGGYIAAPAILAARWCGIPVVLHESNAIPGRVTRLLGRFCQVVAVGLSVAAKRIPGSKAVVTGTPVRSAFLSPQPLPHWVPCGDGPLLVVIGGSQGAVGLNRMVRGALPSLLEAGCRVVHLTGNNDPDVGELDHPNLVEQPFSHEMPGLLQHADLAISRAGAGSLSELAVCGTPTILVPFPQAADQHQEANAACAAALGAAVIVHQHAAEHRALGHALEQLMGARLRGNAAASNPLIPMKQGMMKLAVREADQLLVTLLKPLIGAGL.

Residues 11–13 (TGG), N120, R161, S188, and Q282 each bind UDP-N-acetyl-alpha-D-glucosamine.

It belongs to the glycosyltransferase 28 family. MurG subfamily.

Its subcellular location is the cell inner membrane. It catalyses the reaction di-trans,octa-cis-undecaprenyl diphospho-N-acetyl-alpha-D-muramoyl-L-alanyl-D-glutamyl-meso-2,6-diaminopimeloyl-D-alanyl-D-alanine + UDP-N-acetyl-alpha-D-glucosamine = di-trans,octa-cis-undecaprenyl diphospho-[N-acetyl-alpha-D-glucosaminyl-(1-&gt;4)]-N-acetyl-alpha-D-muramoyl-L-alanyl-D-glutamyl-meso-2,6-diaminopimeloyl-D-alanyl-D-alanine + UDP + H(+). The protein operates within cell wall biogenesis; peptidoglycan biosynthesis. In terms of biological role, cell wall formation. Catalyzes the transfer of a GlcNAc subunit on undecaprenyl-pyrophosphoryl-MurNAc-pentapeptide (lipid intermediate I) to form undecaprenyl-pyrophosphoryl-MurNAc-(pentapeptide)GlcNAc (lipid intermediate II). This chain is UDP-N-acetylglucosamine--N-acetylmuramyl-(pentapeptide) pyrophosphoryl-undecaprenol N-acetylglucosamine transferase, found in Prochlorococcus marinus (strain MIT 9303).